Here is a 146-residue protein sequence, read N- to C-terminus: Anti-sigma F factor (146 aa).

It belongs to the anti-sigma-factor family.

The enzyme catalyses L-seryl-[protein] + ATP = O-phospho-L-seryl-[protein] + ADP + H(+). It carries out the reaction L-threonyl-[protein] + ATP = O-phospho-L-threonyl-[protein] + ADP + H(+). Binds to sigma F and blocks its ability to form an RNA polymerase holoenzyme (E-sigma F). Phosphorylates SpoIIAA on a serine residue. This phosphorylation may enable SpoIIAA to act as an anti-anti-sigma factor that counteracts SpoIIAB and thus releases sigma F from inhibition. This is Anti-sigma F factor from Bacillus cereus (strain G9842).